Here is a 150-residue protein sequence, read N- to C-terminus: Centrin-B (150 aa).

3 consecutive EF-hand domains span residues 12–46, 80–114, and 115–150; these read DQIS…LGCE, DSMS…IGEE, and CSDS…KKVL. Residues Asp-128, Asp-130, Asp-132, and Glu-139 each coordinate Ca(2+).

Belongs to the centrin family.

It localises to the cytoplasm. Its subcellular location is the cytoskeleton. It is found in the microtubule organizing center. The protein resides in the centrosome. Plays a fundamental role in microtubule-organizing center structure and function. This is Centrin-B (cenB) from Dictyostelium discoideum (Social amoeba).